The primary structure comprises 220 residues: Deoxyribose-phosphate aldolase (220 aa).

Aspartate 89 acts as the Proton donor/acceptor in catalysis. The active-site Schiff-base intermediate with acetaldehyde is the lysine 150. Residue lysine 182 is the Proton donor/acceptor of the active site.

This sequence belongs to the DeoC/FbaB aldolase family. DeoC type 1 subfamily.

Its subcellular location is the cytoplasm. It catalyses the reaction 2-deoxy-D-ribose 5-phosphate = D-glyceraldehyde 3-phosphate + acetaldehyde. Its pathway is carbohydrate degradation; 2-deoxy-D-ribose 1-phosphate degradation; D-glyceraldehyde 3-phosphate and acetaldehyde from 2-deoxy-alpha-D-ribose 1-phosphate: step 2/2. Functionally, catalyzes a reversible aldol reaction between acetaldehyde and D-glyceraldehyde 3-phosphate to generate 2-deoxy-D-ribose 5-phosphate. The protein is Deoxyribose-phosphate aldolase of Mycoplasmoides pirum (Mycoplasma pirum).